A 179-amino-acid chain; its full sequence is Large ribosomal subunit protein uL5 (179 aa).

This sequence belongs to the universal ribosomal protein uL5 family. In terms of assembly, part of the 50S ribosomal subunit; part of the 5S rRNA/L5/L18/L25 subcomplex. Contacts the 5S rRNA and the P site tRNA. Forms a bridge to the 30S subunit in the 70S ribosome.

Functionally, this is one of the proteins that bind and probably mediate the attachment of the 5S RNA into the large ribosomal subunit, where it forms part of the central protuberance. In the 70S ribosome it contacts protein S13 of the 30S subunit (bridge B1b), connecting the 2 subunits; this bridge is implicated in subunit movement. Contacts the P site tRNA; the 5S rRNA and some of its associated proteins might help stabilize positioning of ribosome-bound tRNAs. This is Large ribosomal subunit protein uL5 from Microcystis aeruginosa (strain NIES-843 / IAM M-2473).